Consider the following 353-residue polypeptide: Tetraacyldisaccharide 4'-kinase (353 aa).

Residue 66 to 73 (TVGGTGKT) participates in ATP binding.

This sequence belongs to the LpxK family.

It catalyses the reaction a lipid A disaccharide + ATP = a lipid IVA + ADP + H(+). It functions in the pathway glycolipid biosynthesis; lipid IV(A) biosynthesis; lipid IV(A) from (3R)-3-hydroxytetradecanoyl-[acyl-carrier-protein] and UDP-N-acetyl-alpha-D-glucosamine: step 6/6. Functionally, transfers the gamma-phosphate of ATP to the 4'-position of a tetraacyldisaccharide 1-phosphate intermediate (termed DS-1-P) to form tetraacyldisaccharide 1,4'-bis-phosphate (lipid IVA). In Geobacter sulfurreducens (strain ATCC 51573 / DSM 12127 / PCA), this protein is Tetraacyldisaccharide 4'-kinase.